A 333-amino-acid polypeptide reads, in one-letter code: Fe-S cluster assembly protein dre2 (333 aa).

The interval 1–29 (MSPITLDLTSDFNPANTTGAGSSSSQPRT) is disordered. The segment covering 7–28 (DLTSDFNPANTTGAGSSSSQPR) has biased composition (polar residues). Residues 23-158 (SSSQPRTLLV…KPDYAEEEAV (136 aa)) are N-terminal SAM-like domain. The tract at residues 159 to 225 (PLRFGLKRKT…EDTLLTEADL (67 aa)) is linker. The [2Fe-2S] cluster site is built by Cys235, Cys246, Cys249, and Cys251. Positions 235–251 (CQPKPGKKRRACKDCTC) are fe-S binding site A. Residues Cys296, Cys299, Cys307, and Cys310 each contribute to the [4Fe-4S] cluster site. 2 consecutive short sequence motifs (cx2C motif) follow at residues 296–299 (CGSC) and 307–310 (CAGC). The tract at residues 296 to 310 (CGSCALGDAFRCAGC) is fe-S binding site B.

Belongs to the anamorsin family. In terms of assembly, monomer. Interacts with tah18. Interacts with mia40. [2Fe-2S] cluster is required as a cofactor. Requires [4Fe-4S] cluster as cofactor.

The protein localises to the cytoplasm. It localises to the mitochondrion intermembrane space. Functionally, component of the cytosolic iron-sulfur (Fe-S) protein assembly (CIA) machinery required for the maturation of extramitochondrial Fe-S proteins. Part of an electron transfer chain functioning in an early step of cytosolic Fe-S biogenesis, facilitating the de novo assembly of a [4Fe-4S] cluster on the scaffold complex cfd1-nbp35. Electrons are transferred to dre2 from NADPH via the FAD- and FMN-containing protein tah18. Tah18-dre2 are also required for the assembly of the diferric tyrosyl radical cofactor of ribonucleotide reductase (RNR), probably by providing electrons for reduction during radical cofactor maturation in the catalytic small subunit rnr2. The sequence is that of Fe-S cluster assembly protein dre2 from Neurospora crassa (strain ATCC 24698 / 74-OR23-1A / CBS 708.71 / DSM 1257 / FGSC 987).